Consider the following 55-residue polypeptide: uncharacterized protein (55 aa).

Residues 24–46 (LFIIFFTYSYYYCGFLQSFNYII) traverse the membrane as a helical segment.

The protein resides in the membrane. This is an uncharacterized protein from Dictyostelium discoideum (Social amoeba).